The primary structure comprises 447 residues: Cysteine--tRNA ligase (447 aa).

Residue cysteine 28 participates in Zn(2+) binding. The short motif at 30 to 40 (PTVYNYIHIGN) is the 'HIGH' region element. Positions 211, 236, and 240 each coordinate Zn(2+). The 'KMSKS' region motif lies at 268 to 272 (KMSKS). Lysine 271 is an ATP binding site.

It belongs to the class-I aminoacyl-tRNA synthetase family. In terms of assembly, monomer. Zn(2+) is required as a cofactor.

Its subcellular location is the cytoplasm. The catalysed reaction is tRNA(Cys) + L-cysteine + ATP = L-cysteinyl-tRNA(Cys) + AMP + diphosphate. This chain is Cysteine--tRNA ligase, found in Streptococcus pyogenes serotype M18 (strain MGAS8232).